The sequence spans 331 residues: Ketol-acid reductoisomerase (NADP(+)) (331 aa).

The 181-residue stretch at 2–182 (AQLFYDTDAD…GGTRAGILET (181 aa)) folds into the KARI N-terminal Rossmann domain. NADP(+) contacts are provided by residues 25 to 28 (YGSQ), S51, S53, and 83 to 86 (DEFQ). H108 is a catalytic residue. G134 is a binding site for NADP(+). One can recognise a KARI C-terminal knotted domain in the interval 183–328 (NFKEETETDL…KGLRSMFSWL (146 aa)). D191, E195, E227, and E231 together coordinate Mg(2+). S252 contacts substrate.

Belongs to the ketol-acid reductoisomerase family. The cofactor is Mg(2+).

The catalysed reaction is (2R)-2,3-dihydroxy-3-methylbutanoate + NADP(+) = (2S)-2-acetolactate + NADPH + H(+). It catalyses the reaction (2R,3R)-2,3-dihydroxy-3-methylpentanoate + NADP(+) = (S)-2-ethyl-2-hydroxy-3-oxobutanoate + NADPH + H(+). The protein operates within amino-acid biosynthesis; L-isoleucine biosynthesis; L-isoleucine from 2-oxobutanoate: step 2/4. It participates in amino-acid biosynthesis; L-valine biosynthesis; L-valine from pyruvate: step 2/4. In terms of biological role, involved in the biosynthesis of branched-chain amino acids (BCAA). Catalyzes an alkyl-migration followed by a ketol-acid reduction of (S)-2-acetolactate (S2AL) to yield (R)-2,3-dihydroxy-isovalerate. In the isomerase reaction, S2AL is rearranged via a Mg-dependent methyl migration to produce 3-hydroxy-3-methyl-2-ketobutyrate (HMKB). In the reductase reaction, this 2-ketoacid undergoes a metal-dependent reduction by NADPH to yield (R)-2,3-dihydroxy-isovalerate. This is Ketol-acid reductoisomerase (NADP(+)) from Synechococcus sp. (strain WH7803).